The following is a 310-amino-acid chain: Protein-methionine-sulfoxide reductase catalytic subunit MsrP (310 aa).

The tat-type signal signal peptide spans 1 to 45 (MRKTSSPRIAPSEITPRDLYHDRRRFMQAAAGAAAAALWPHWLSA). Mo-molybdopterin-binding positions include Asn73, 76–77 (YE), Cys131, Thr166, Asn214, Arg219, and 230–232 (SAK).

Belongs to the MsrP family. In terms of assembly, heterodimer of a catalytic subunit (MsrP) and a heme-binding subunit (MsrQ). Mo-molybdopterin is required as a cofactor. Post-translationally, predicted to be exported by the Tat system. The position of the signal peptide cleavage has not been experimentally proven.

The protein localises to the periplasm. It carries out the reaction L-methionyl-[protein] + a quinone + H2O = L-methionyl-(S)-S-oxide-[protein] + a quinol. The catalysed reaction is L-methionyl-[protein] + a quinone + H2O = L-methionyl-(R)-S-oxide-[protein] + a quinol. In terms of biological role, part of the MsrPQ system that repairs oxidized periplasmic proteins containing methionine sulfoxide residues (Met-O), using respiratory chain electrons. Thus protects these proteins from oxidative-stress damage caused by reactive species of oxygen and chlorine generated by the host defense mechanisms. MsrPQ is essential for the maintenance of envelope integrity under bleach stress, rescuing a wide series of structurally unrelated periplasmic proteins from methionine oxidation. The catalytic subunit MsrP is non-stereospecific, being able to reduce both (R-) and (S-) diastereoisomers of methionine sulfoxide. The protein is Protein-methionine-sulfoxide reductase catalytic subunit MsrP of Methylococcus capsulatus (strain ATCC 33009 / NCIMB 11132 / Bath).